The primary structure comprises 100 residues: MLGSPLREYELLVSLGSEFEPEAESRVRSLFTPVEPEGVTVKHLDVLGVRKFAYEIKGRNDGVCVVVRLLANAGSIAEIGRQMRLTEDVIRTKLLRVGRK.

It belongs to the bacterial ribosomal protein bS6 family.

Binds together with bS18 to 16S ribosomal RNA. This Tropheryma whipplei (strain TW08/27) (Whipple's bacillus) protein is Small ribosomal subunit protein bS6.